The chain runs to 515 residues: Cytochrome P450 monooxygenase mfmA (515 aa).

Residues 3-23 traverse the membrane as a helical segment; sequence KISIIPIVGVALSLAIILQLG. Cysteine 453 lines the heme pocket.

It belongs to the cytochrome P450 family. Heme is required as a cofactor.

Its subcellular location is the membrane. The protein operates within secondary metabolite biosynthesis; terpenoid biosynthesis. Cytochrome P450 monooxygenase; part of the gene cluster that mediates the biosynthesis of the phthalide-terpenoid hybrid 11'-O-desmethylfendlerol. Within the pathway, mfma and mfmC act together to convert 3,5-dimethylorsellinic acid (DMOA) into the phthalide 5,7-dihydroxy-4-(hydroxymethyl)-6-methylphthalide. MfmA performs especially an hydroxylation at C-9. The biosynthesis of 11'-O-desmethylfendlerol begins with the NR-PKS mfmB that forms 3,5-dimethylorsellinic acid (DMOA), which is then transformed into the phthalide 5,7-dihydroxy-4-(hydroxymethyl)-6-methylphthalide by the cytochrome P450 monooxygenase mfmA and the hydrolase mfmC. Subsequently, the methyltransferase mfmE catalyzes 7-O-methylation to yield 5-hydroxy-4-(hydroxymethyl)-7-methoxy-6-methylphthalide, which undergoes C-3 hydroxylation by the cytochrome P450 monooxygenase mfmF. The resultant cyclopolic acid (2,5-dihydroxy-4-(hydroxymethyl)-7-methoxy-6-methylphthalide) is then farnesylated by the DMATS-type prenyltransferase mfmD to afford 5-O-farnesylcyclopolic acid. Finally, the Pyr4-family terpene cyclase mfmH cyclizes the farnesyl moiety of 5-O-farnesylcyclopolic acid into a drimane-like structure, thus completing the biosynthesis of 11'-O-desmethylfendlerol. The sequence is that of Cytochrome P450 monooxygenase mfmA from Annulohypoxylon moriforme (Filamentous fungus).